The following is a 419-amino-acid chain: Phospho-N-acetylmuramoyl-pentapeptide-transferase (419 aa).

A run of 10 helical transmembrane segments spans residues 22–42, 72–92, 94–114, 135–155, 210–230, 238–258, 266–286, 303–323, 327–347, and 396–416; these read YVSF…TAIG, TPTM…LLCA, LNNI…ALGF, IVGQ…SPDV, AAWL…SNGA, GLAA…AYMS, FLNI…AAFI, FMGD…AIII, LLIP…MLQV, and KIVV…IVTL.

It belongs to the glycosyltransferase 4 family. MraY subfamily. Mg(2+) serves as cofactor.

The protein localises to the cell inner membrane. It catalyses the reaction UDP-N-acetyl-alpha-D-muramoyl-L-alanyl-gamma-D-glutamyl-meso-2,6-diaminopimeloyl-D-alanyl-D-alanine + di-trans,octa-cis-undecaprenyl phosphate = di-trans,octa-cis-undecaprenyl diphospho-N-acetyl-alpha-D-muramoyl-L-alanyl-D-glutamyl-meso-2,6-diaminopimeloyl-D-alanyl-D-alanine + UMP. It participates in cell wall biogenesis; peptidoglycan biosynthesis. Functionally, catalyzes the initial step of the lipid cycle reactions in the biosynthesis of the cell wall peptidoglycan: transfers peptidoglycan precursor phospho-MurNAc-pentapeptide from UDP-MurNAc-pentapeptide onto the lipid carrier undecaprenyl phosphate, yielding undecaprenyl-pyrophosphoryl-MurNAc-pentapeptide, known as lipid I. This is Phospho-N-acetylmuramoyl-pentapeptide-transferase from Parabacteroides distasonis (strain ATCC 8503 / DSM 20701 / CIP 104284 / JCM 5825 / NCTC 11152).